Reading from the N-terminus, the 60-residue chain is Large ribosomal subunit protein uL30 (60 aa).

This sequence belongs to the universal ribosomal protein uL30 family. In terms of assembly, part of the 50S ribosomal subunit.

The sequence is that of Large ribosomal subunit protein uL30 from Cupriavidus necator (strain ATCC 17699 / DSM 428 / KCTC 22496 / NCIMB 10442 / H16 / Stanier 337) (Ralstonia eutropha).